We begin with the raw amino-acid sequence, 320 residues long: Reticulocalbin-2 (320 aa).

A signal peptide spans 1–25 (MRLGPRPAALGLLLPLLLYAAVAGA). EF-hand domains are found at residues 64–99 (EQQR…SFKH) and 100–135 (YAMQ…RVID). Residues D77, D79, D81, E88, D113, N115, D117, and E124 each coordinate Ca(2+). T140 bears the Phosphothreonine mark. EF-hand domains lie at 150–185 (FRQL…HPEE), 189–224 (MTEF…DPTA), 230–265 (WILV…NNQG), and 266–301 (IAQE…FLTS). 16 residues coordinate Ca(2+): D167, E176, D202, N204, D206, E213, D243, D245, D247, R249, E254, D279, N281, D283, K285, and E290. Positions 317-320 (HDEL) match the Prevents secretion from ER motif.

Belongs to the CREC family.

It is found in the endoplasmic reticulum lumen. Not known. Binds calcium. In Mus musculus (Mouse), this protein is Reticulocalbin-2 (Rcn2).